Reading from the N-terminus, the 841-residue chain is MEQGVIERARELRRRIENADHRYYDLADPEITDAQYDQLFRELQELEQKYPELVTADSPSMRVGGAVRKSFVKVRHSIPMLSLANAFDEVEVKNFVDRIFRRMGSSNPLEFSVEPKFDGLAISLRYELGKFVQGVTRGDGDVGEDVSENIRTIRSVPLKLKGNNVPAILEVRGEVYMPRDGFSEFNKRAMARGEKLLANPRNGAAGSLRQLDSRISAQRPLSFFAYGVGLIQVEQDLFEEIPQSIASTHSAMLAQLRAWGFPVSSLVEVVQGSDGLLAYYQRIGEARDGLPFDIDGVVYKLDDLAGQREMGFVSRAPRWALAHKFPAQEQSTTVEAIEIQIGRTGAATPVARLKPVHVAGVIVTNATLHNADQIARLDVRVGDTVIVRRAGDVIPEVAAVVADQRPPATQSWQMPTQCPVCGSEIVREEGQAVWRCSGELTCPAQRKEAFRHFVSRRAMDVDGLGEKFIEVLVDSGVVQGVADLYLLTVDQLLQLRMISTAESPHAFLREAREHLASGAYAQLEATLVGIGVDLAGEREVPQTWQADLLRAGLPTFDWNRKKIATKWAENLIEAIETSRDTTLERFLFALGIEHVGESTAKALSAWFGDLDLIRHLPWPLFKRVPDIGGEVARSLGHFFDQPGNQKAIDHLLARKVRIGDTHPPSPKLRGELRLANLLEDLEIPKVTPIRAAQIATAFGSIDALRNGGPEPLVEAGVPQSVAESLATWLLVPANDTLAVNAQKKLSALLAMMPEAGEEKTGPLDGQTVVITGTLAALTRDAAKQRLEALGAKVAGSVSKKTAFLVAGEEAGSKLDKAQSLGVEIWDEARLLAFLGEHGQQR.

NAD(+)-binding positions include 33–37 (DAQYD), 82–83 (SL), and E114. K116 (N6-AMP-lysine intermediate) is an active-site residue. R137, E174, K300, and K324 together coordinate NAD(+). C418, C421, C436, and C442 together coordinate Zn(2+). Positions 758-841 (EKTGPLDGQT…AFLGEHGQQR (84 aa)) constitute a BRCT domain.

Belongs to the NAD-dependent DNA ligase family. LigA subfamily. Mg(2+) is required as a cofactor. It depends on Mn(2+) as a cofactor.

It carries out the reaction NAD(+) + (deoxyribonucleotide)n-3'-hydroxyl + 5'-phospho-(deoxyribonucleotide)m = (deoxyribonucleotide)n+m + AMP + beta-nicotinamide D-nucleotide.. In terms of biological role, DNA ligase that catalyzes the formation of phosphodiester linkages between 5'-phosphoryl and 3'-hydroxyl groups in double-stranded DNA using NAD as a coenzyme and as the energy source for the reaction. It is essential for DNA replication and repair of damaged DNA. The chain is DNA ligase from Xanthomonas oryzae pv. oryzae (strain MAFF 311018).